Consider the following 292-residue polypeptide: 4'-phosphopantetheinyl transferase 1 (292 aa).

It belongs to the P-Pant transferase superfamily.

The enzyme catalyses apo-[ACP] + CoA = holo-[ACP] + adenosine 3',5'-bisphosphate + H(+). Transfers the 4'-phosphopantetheine moiety from coenzyme A to a Ser of an acyl-carrier-protein. The enzyme is able to transfer the cofactor to a broad range of enzymes with acyl- or peptidyl-carrier protein domains. Required for primary biological processes such as growth and asexual/sexual development, and activates target enzymes involved in the synthesis of metabolites such as fatty acids, nonribosomal peptides and polyketides such as the gamma-pyrones fusapyrone (FPY) and deoxyfusapyrone (dFPY). The protein is 4'-phosphopantetheinyl transferase 1 of Fusarium mangiferae (Mango malformation disease fungus).